We begin with the raw amino-acid sequence, 701 residues long: E3 ubiquitin-protein ligase RNF19B (701 aa).

Residues 1–97 (MGSEKDSESP…PAEPLSTSQA (97 aa)) form a disordered region. The segment at 1–304 (MGSEKDSESP…VCGCEFCWLC (304 aa)) is required for ubiquitin ligase activity and for protection against staurosporin-induced cell death. Low complexity predominate over residues 57–72 (QQLHQQQQIQQQQLLQ). The tract at residues 103–323 (ELLECPLCLV…LSPSGCTFWG (221 aa)) is TRIAD supradomain. Zn(2+) is bound by residues cysteine 107, cysteine 110, cysteine 130, cysteine 133, cysteine 194, cysteine 199, cysteine 216, cysteine 221, cysteine 226, cysteine 229, histidine 234, cysteine 239, cysteine 273, and cysteine 276. An RING-type 1 zinc finger spans residues 107 to 156 (CPLCLVRQPAEQLPELQGCSHRSCLCCLRQYLRIEITESRVQLSCPECAE). Residues 174–239 (EKYEEFLLRR…KQAWHPNQTC (66 aa)) form an IBR-type zinc finger. Residues 273-304 (CPRCGAYIIKMNDGSCNHMTCAVCGCEFCWLC) form an RING-type 2; atypical zinc finger. Cysteine 288 is a catalytic residue. Residues cysteine 293, cysteine 296, cysteine 301, cysteine 304, histidine 312, and cysteine 319 each coordinate Zn(2+). 2 helical membrane-spanning segments follow: residues 340–360 (LIGA…AMVI) and 396–416 (IITA…IMLA). 2 disordered regions span residues 472-495 (LEGA…PGGL) and 658-677 (AELT…HGAP).

Belongs to the RBR family. RNF19 subfamily. In terms of assembly, interacts with UBE2L3, UBE2L6 and UCKL1.

Its subcellular location is the cytoplasmic granule membrane. It localises to the endoplasmic reticulum membrane. It carries out the reaction [E2 ubiquitin-conjugating enzyme]-S-ubiquitinyl-L-cysteine + [acceptor protein]-L-lysine = [E2 ubiquitin-conjugating enzyme]-L-cysteine + [acceptor protein]-N(6)-ubiquitinyl-L-lysine.. It functions in the pathway protein modification; protein ubiquitination. E3 ubiquitin-protein ligase which accepts ubiquitin from E2 ubiquitin-conjugating enzymes UBE2L3 and UBE2L6 in the form of a thioester and then directly transfers the ubiquitin to targeted substrates, such as UCKL1. Involved in the cytolytic activity of natural killer cells and cytotoxic T-cells. Protects against staurosporin-induced cell death. The protein is E3 ubiquitin-protein ligase RNF19B (rnf19b) of Danio rerio (Zebrafish).